Here is an 88-residue protein sequence, read N- to C-terminus: Homeobox protein knotted-1-like 1 (88 aa).

Positions glutamate 4–isoleucine 24 constitute an ELK domain. The homeobox; TALE-type DNA-binding region spans leucine 25–asparagine 88.

The protein belongs to the TALE/KNOX homeobox family. As to expression, highly expressed in the roots.

The protein localises to the nucleus. The chain is Homeobox protein knotted-1-like 1 (KNOX1) from Zea mays (Maize).